The following is a 192-amino-acid chain: Ribosome maturation factor RimP (192 aa).

It belongs to the RimP family.

The protein localises to the cytoplasm. Functionally, required for maturation of 30S ribosomal subunits. In Mycobacterium sp. (strain JLS), this protein is Ribosome maturation factor RimP.